A 525-amino-acid polypeptide reads, in one-letter code: Ankyrin repeat and SOCS box protein 3 (525 aa).

11 ANK repeats span residues 9 to 38, 42 to 71, 78 to 107, 111 to 140, 145 to 174, 178 to 207, 211 to 240, 246 to 275, 279 to 308, 315 to 346, and 348 to 373; these read DTCSTVGLAAREGNVKVLRKLLKKGRSIDV, RGWMPIHEASYHNSVECLRMLIRADSSENY, EGFCALHLAASQGHWKIIQILLEAGADPNA, EETTPLFLAVENGQIDVLRLLLRYGANVNG, CGWNALHQASFQGNAEIIKLLLKKGANKEC, FGITPLFVAAQYGKLESLSILISSGADVNC, DKATPLFIAAQEGHTECVELLLSSGADPDL, NWQLPIHAAAQMGHTKILDLLIPLTNRVCD, NKVSPVYSAVLGGHEECLEMLLQSGYSPDA, GFSSPLCMAFQKDCDFFGIVNILLKYGAQLNE, and HLAYCLKYERFSVFRYFLKKCCPSTP. The 65-residue stretch at 441–505 folds into the SOCS box domain; it reads MLSARASNSS…HDYLLYAEVL (65 aa).

This sequence belongs to the ankyrin SOCS box (ASB) family. As to quaternary structure, interacts with ELOB and TNFRSF1B.

It participates in protein modification; protein ubiquitination. In terms of biological role, probable substrate-recognition component of a SCF-like ECS (Elongin-Cullin-SOCS-box protein) E3 ubiquitin-protein ligase complex which mediates the ubiquitination and subsequent proteasomal degradation of target proteins. Recognizes TNFRSF1B. The chain is Ankyrin repeat and SOCS box protein 3 (ASB3) from Bos taurus (Bovine).